The chain runs to 2575 residues: Non-reducing polyketide synthase pks11 (2575 aa).

Residues 89–228 form the Starter acyltransferase (SAT) domain; the sequence is LANIILSPLV…ASKTVSTLQG (140 aa). Catalysis depends on Cys129, which acts as the Nucleophile; for transacylase activity. His247 functions as the Proton donor/acceptor; for transacylase activity in the catalytic mechanism. One can recognise a Ketosynthase family 3 (KS3) domain in the interval 373-790; the sequence is EDDIAVVGMS…GSNASAVVTE (418 aa). Residues Cys538, His673, and His713 each act as for beta-ketoacyl synthase activity in the active site. A Malonyl-CoA:ACP transacylase (MAT) domain is found at 901 to 1192; it reads FGGQISTYVG…TNMASRALGS (292 aa). Residues 1276-1409 are N-terminal hotdog fold; the sequence is PKGLWSFIDY…GQIIFVSTDN (134 aa). The PKS/mFAS DH domain maps to 1276–1586; it reads PKGLWSFIDY…YHKVAKATMS (311 aa). Positions 1307-1584 are product template (PT) domain; that stretch reads LVSGHIIAQT…VNYHKVAKAT (278 aa). Residue His1311 is the Proton acceptor; for dehydratase activity of the active site. The interval 1437–1586 is C-terminal hotdog fold; the sequence is ADDIIQGRNI…YHKVAKATMS (150 aa). Asp1493 acts as the Proton donor; for dehydratase activity in catalysis. Polar residues predominate over residues 1597–1606; sequence TTSTSTNVKS. Positions 1597–1636 are disordered; that stretch reads TTSTSTNVKSSPAAAEGSSPVENGASGSGSKAKKTKSGAG. Residues 1637–1711 enclose the Carrier domain; it reads QDVVNKTKGL…GLVQIIKSTL (75 aa). Position 1671 is an O-(pantetheine 4'-phosphoryl)serine (Ser1671). Residues 1713–1762 form a disordered region; sequence VSDDEEGSDQEGSEASSSESSTTFTPSTTATTVSDVEDNGNEKSIGKEKS. Acidic residues predominate over residues 1714–1724; sequence SDDEEGSDQEG. The segment covering 1725–1746 has biased composition (low complexity); that stretch reads SEASSSESSTTFTPSTTATTVS. Residues 1752 to 1762 are compositionally biased toward basic and acidic residues; sequence GNEKSIGKEKS. A methyltransferase domain region spans residues 1835-2130; sequence LTRIPHDPQH…HIDWTDGNSP (296 aa). The region spanning 2204 to 2448 is the Thioester reductase (TE) domain; the sequence is ITGATGSLGS…LCWTPVDDVA (245 aa).

Pantetheine 4'-phosphate serves as cofactor.

The protein operates within secondary metabolite biosynthesis. Its function is as follows. Non-reducing polyketide synthase; part of the gene cluster that mediates the biosynthesis of mitorubrinol and mitorubrinic acid, two virulence factors that improve T.marneffei intracellular survival in macrophages. The two polyketide synthases pks12 and pks11 are probably responsible for sequential use in the biosynthesis of mitorubrinol and mitorubrinic acid. The first part of the biosynthesis is probably catalyzed by pks12, which synthesized orsellinic acid. This tetraketide is then used as a starter unit for pks11, which possesses a SAT domain, in the second part of the biosynthesis. Pks11, contains a methyltransferase domain, also served that methylates the products, using a methyl group from S-adenosylmethionine. This is Non-reducing polyketide synthase pks11 from Talaromyces marneffei (Penicillium marneffei).